The sequence spans 231 residues: NADH-ubiquinone oxidoreductase chain 4 (231 aa).

The next 6 membrane-spanning stretches (helical) occupy residues 1–21 (PIAG…YGII), 34–54 (LFLP…LTCL), 63–85 (IAYS…TPWG), 89–111 (AMAL…NMTY), 124–146 (GLHN…NIAI), and 169–189 (TIII…HMFL).

This sequence belongs to the complex I subunit 4 family.

It localises to the mitochondrion membrane. It catalyses the reaction a ubiquinone + NADH + 5 H(+)(in) = a ubiquinol + NAD(+) + 4 H(+)(out). In terms of biological role, core subunit of the mitochondrial membrane respiratory chain NADH dehydrogenase (Complex I) that is believed to belong to the minimal assembly required for catalysis. Complex I functions in the transfer of electrons from NADH to the respiratory chain. The immediate electron acceptor for the enzyme is believed to be ubiquinone. The protein is NADH-ubiquinone oxidoreductase chain 4 (MT-ND4) of Crotalus lepidus (Banded rock rattlesnake).